We begin with the raw amino-acid sequence, 103 residues long: Large ribosomal subunit protein bL21 (103 aa).

The protein belongs to the bacterial ribosomal protein bL21 family. In terms of assembly, part of the 50S ribosomal subunit. Contacts protein L20.

In terms of biological role, this protein binds to 23S rRNA in the presence of protein L20. The sequence is that of Large ribosomal subunit protein bL21 from Verminephrobacter eiseniae (strain EF01-2).